A 114-amino-acid chain; its full sequence is Fumarate reductase subunit D (114 aa).

Helical transmembrane passes span 24 to 44 (VSAI…PFGL), 50 to 70 (LITF…TIFP), and 92 to 112 (GGFI…FAVI).

This sequence belongs to the FrdD family. Part of an enzyme complex containing four subunits: a flavoprotein (FrdA), an iron-sulfur protein (FrdB), and two hydrophobic anchor proteins (FrdC and FrdD).

It is found in the cell inner membrane. Its function is as follows. Anchors the catalytic components of the fumarate reductase complex to the cell membrane, binds quinones. This Haemophilus influenzae (strain PittEE) protein is Fumarate reductase subunit D.